Here is a 139-residue protein sequence, read N- to C-terminus: Intrinsically disordered protein, expressed in pharynx 15 (139 aa).

Over residues 1–12 (MNNNQGMYNTQT) the composition is skewed to polar residues. Positions 1–98 (MNNNQGMYNT…GSSTPSPQYS (98 aa)) are disordered. 2 stretches are compositionally biased toward low complexity: residues 13-41 (TQGYGNNQGSYQNQMMYNNNNPQNTQTTT) and 49-98 (QPQQ…PQYS).

The chain is Intrinsically disordered protein, expressed in pharynx 15 from Caenorhabditis elegans.